We begin with the raw amino-acid sequence, 291 residues long: 4-hydroxy-tetrahydrodipicolinate synthase (291 aa).

Residue Thr-45 coordinates pyruvate. Tyr-131 serves as the catalytic Proton donor/acceptor. Catalysis depends on Lys-159, which acts as the Schiff-base intermediate with substrate. Ile-202 is a binding site for pyruvate.

The protein belongs to the DapA family. In terms of assembly, homotetramer; dimer of dimers.

Its subcellular location is the cytoplasm. It catalyses the reaction L-aspartate 4-semialdehyde + pyruvate = (2S,4S)-4-hydroxy-2,3,4,5-tetrahydrodipicolinate + H2O + H(+). It participates in amino-acid biosynthesis; L-lysine biosynthesis via DAP pathway; (S)-tetrahydrodipicolinate from L-aspartate: step 3/4. In terms of biological role, catalyzes the condensation of (S)-aspartate-beta-semialdehyde [(S)-ASA] and pyruvate to 4-hydroxy-tetrahydrodipicolinate (HTPA). The sequence is that of 4-hydroxy-tetrahydrodipicolinate synthase from Methanosarcina barkeri (strain Fusaro / DSM 804).